Consider the following 297-residue polypeptide: ClpXP adapter protein SpxH (297 aa).

It belongs to the SpxH family. Interacts with Spx.

It localises to the cytoplasm. Its function is as follows. Adapter protein required for efficient degradation of Spx by ClpXP under non-stress conditions. Interaction with Spx stabilizes Spx and exposes the C-terminus of Spx for recognition and proteolysis by ClpXP. This Bacillus cereus (strain ZK / E33L) protein is ClpXP adapter protein SpxH.